The primary structure comprises 272 residues: Streptomycin 3''-kinase (272 aa).

Asp-190 serves as the catalytic Proton acceptor.

Belongs to the aminoglycoside phosphotransferase family.

The enzyme catalyses streptomycin + ATP = streptomycin 3''-phosphate + ADP + H(+). In terms of biological role, the aminoglycoside phosphotransferases achieve inactivation of their antibiotic substrates by phosphorylation. The sequence is that of Streptomycin 3''-kinase (aphE) from Streptomyces griseus.